Reading from the N-terminus, the 717-residue chain is Transport/processing ATP-binding protein ComA (717 aa).

Residues 11–138 form the Peptidase C39 domain; sequence QVDQMDCGVA…EEWTGVTLFM (128 aa). Cysteine 17 is an active-site residue. A run of 6 helical transmembrane segments spans residues 166–186, 205–225, 237–257, 282–302, 306–326, and 397–417; these read GLIA…IVGS, LGII…LSYA, LSID…MSFF, TILS…VLFS, NLFF…FAFM, and VAHL…VMDG. Residues 168–450 enclose the ABC transmembrane type-1 domain; it reads IANIVLATLL…IINLQTKLQT (283 aa). Residues 484 to 717 enclose the ABC transporter domain; the sequence is MTFKQVHYKY…GGFYAHLVNS (234 aa). Position 517 to 524 (517 to 524) interacts with ATP; sequence GISGSGKT.

The protein belongs to the ABC transporter superfamily. Competence factor exporter (TC 3.A.1.112.1) family.

Its subcellular location is the cell membrane. In terms of biological role, required for induction of competence. Seems to transport the competence-stimulating peptide (CSP). The protein is Transport/processing ATP-binding protein ComA (comA) of Streptococcus pneumoniae serotype 4 (strain ATCC BAA-334 / TIGR4).